We begin with the raw amino-acid sequence, 157 residues long: 2-C-methyl-D-erythritol 2,4-cyclodiphosphate synthase (157 aa).

Residues Asp-8 and His-10 each contribute to the a divalent metal cation site. Residues 8 to 10 (DVH) and 34 to 35 (HS) each bind 4-CDP-2-C-methyl-D-erythritol 2-phosphate. His-42 is an a divalent metal cation binding site. Residues 56–58 (DIG), 61–65 (FPDTD), 100–106 (AQKPKMA), 132–135 (TTEE), and Phe-139 each bind 4-CDP-2-C-methyl-D-erythritol 2-phosphate.

It belongs to the IspF family. In terms of assembly, homotrimer. Requires a divalent metal cation as cofactor.

The enzyme catalyses 4-CDP-2-C-methyl-D-erythritol 2-phosphate = 2-C-methyl-D-erythritol 2,4-cyclic diphosphate + CMP. The protein operates within isoprenoid biosynthesis; isopentenyl diphosphate biosynthesis via DXP pathway; isopentenyl diphosphate from 1-deoxy-D-xylulose 5-phosphate: step 4/6. Its function is as follows. Involved in the biosynthesis of isopentenyl diphosphate (IPP) and dimethylallyl diphosphate (DMAPP), two major building blocks of isoprenoid compounds. Catalyzes the conversion of 4-diphosphocytidyl-2-C-methyl-D-erythritol 2-phosphate (CDP-ME2P) to 2-C-methyl-D-erythritol 2,4-cyclodiphosphate (ME-CPP) with a corresponding release of cytidine 5-monophosphate (CMP). This Clostridium novyi (strain NT) protein is 2-C-methyl-D-erythritol 2,4-cyclodiphosphate synthase.